Reading from the N-terminus, the 228-residue chain is Rab-like protein 2A (228 aa).

Residues 28 to 35, 76 to 80, and 133 to 136 contribute to the GTP site; these read GDSAVGKS, DTAGQ, and NKID. Residues 200 to 228 are disordered; that stretch reads LEQEEEDVPDQEQSSSIETPSEEVASPHS.

The protein belongs to the small GTPase superfamily. Rab family. As to quaternary structure, interacts with IFT27, IFT81, IFT172, ATP6V1E1, HK1, LDHC, MAPRE1 and HSPA2. As to expression, expressed in the testis.

Plays an essential role in male fertility, sperm intra-flagellar transport, and tail assembly. Binds, in a GTP-regulated manner, to a specific set of effector proteins including key proteins involved in cilia development and function and delivers them into the growing sperm tail. This is Rab-like protein 2A (RABL2A) from Homo sapiens (Human).